We begin with the raw amino-acid sequence, 434 residues long: Putative D-alanyl-D-alanine carboxypeptidase (434 aa).

A helical; Signal-anchor membrane pass occupies residues 7 to 25 (YLSLLAVSCSVSAAKYPVL).

The protein belongs to the peptidase S12 family. YfeW subfamily.

It is found in the cell inner membrane. The enzyme catalyses Preferential cleavage: (Ac)2-L-Lys-D-Ala-|-D-Ala. Also transpeptidation of peptidyl-alanyl moieties that are N-acyl substituents of D-alanine.. The chain is Putative D-alanyl-D-alanine carboxypeptidase from Escherichia coli O157:H7.